The chain runs to 188 residues: NANOG neighbor homeobox (188 aa).

A disordered region spans residues 28–106; the sequence is ETILANKKQS…NEKQKQYPEK (79 aa). Over residues 57 to 106 the composition is skewed to basic and acidic residues; it reads QNGKQKWREEGEAGRKREREKEEKNEKELQDEQENKRKRENEKQKQYPEK. Residues 102-161 constitute a DNA-binding region (homeobox); sequence QYPEKRLVSKSLMHTLWAKFKLNRCPTIQESLSLSFEFDMTHKQISQWFCKTRKKYNKEM.

Its subcellular location is the nucleus. This is NANOG neighbor homeobox (NANOGNB) from Homo sapiens (Human).